The primary structure comprises 397 residues: L-asparaginase-like protein CG4372 (397 aa).

An N-terminal signal peptide occupies residues 1-22; the sequence is MLAQSCCLRLLILLLLFTTIGS. 3 cysteine pairs are disulfide-bonded: C90–C95, C189–C205, and C344–C371.

The protein belongs to the Ntn-hydrolase family.

This is L-asparaginase-like protein CG4372 from Drosophila melanogaster (Fruit fly).